The following is a 273-amino-acid chain: 29 kDa ribonucleoprotein A, chloroplastic (273 aa).

A chloroplast-targeting transit peptide spans 1–58 (MASSASSLHFLSLTPQTLPLPKPTSQTTSLSFFSLPPSSLNLSLSSSSSCFSSRFVRK). Residues 87–165 (LKIFVGNLPF…RALRVNSGPP (79 aa)) enclose the RRM 1 domain. Residues 156–181 (RALRVNSGPPPEKRENSSFRGGSRGG) are disordered. A linker (Gly-rich) region spans residues 166-187 (PEKRENSSFRGGSRGGGSFDSS). Residues 188–266 (NRVYVGNLAW…RAIRVSPAEA (79 aa)) enclose the RRM 2 domain.

It is found in the plastid. Its subcellular location is the chloroplast. Functionally, could be involved in splicing and/or processing of chloroplast RNA's. This Nicotiana sylvestris (Wood tobacco) protein is 29 kDa ribonucleoprotein A, chloroplastic.